A 676-amino-acid polypeptide reads, in one-letter code: DNA ligase (676 aa).

Residues 35-39, 84-85, and Glu115 contribute to the NAD(+) site; these read DNEYD and SL. Residue Lys117 is the N6-AMP-lysine intermediate of the active site. NAD(+) contacts are provided by Arg138, Glu177, Lys294, and Lys318. Zn(2+) is bound by residues Cys412, Cys415, Cys430, and Cys436. Positions 595-676 constitute a BRCT domain; it reads PTRQPLNGES…FLAFLAQYSA (82 aa).

This sequence belongs to the NAD-dependent DNA ligase family. LigA subfamily. Mg(2+) serves as cofactor. Requires Mn(2+) as cofactor.

The enzyme catalyses NAD(+) + (deoxyribonucleotide)n-3'-hydroxyl + 5'-phospho-(deoxyribonucleotide)m = (deoxyribonucleotide)n+m + AMP + beta-nicotinamide D-nucleotide.. Its function is as follows. DNA ligase that catalyzes the formation of phosphodiester linkages between 5'-phosphoryl and 3'-hydroxyl groups in double-stranded DNA using NAD as a coenzyme and as the energy source for the reaction. It is essential for DNA replication and repair of damaged DNA. This chain is DNA ligase, found in Acinetobacter baylyi (strain ATCC 33305 / BD413 / ADP1).